A 501-amino-acid polypeptide reads, in one-letter code: Acetylcholine receptor subunit beta (501 aa).

Positions 1–23 are cleaved as a signal peptide; the sequence is MTPGALLMLLGALGAPLAPGVRG. At 24–244 the chain is on the extracellular side; it reads SEAEGRLREK…VIFYLIIRRK (221 aa). An intrachain disulfide couples Cys-151 to Cys-165. Asn-164 carries an N-linked (GlcNAc...) asparagine glycan. A run of 3 helical transmembrane segments spans residues 245-269, 277-295, and 311-332; these read PLFYLVNVIAPCILITLLAIFVFYL, MGLSIFALLTLTVFLLLLA, and YLMFTMVLVTFSVILSVVVLNL. Over 333–469 the chain is Cytoplasmic; the sequence is HHRSPHTHQM…WQFVAMVVDR (137 aa). Tyr-390 bears the Phosphotyrosine; by Tyr-kinases mark. The helical transmembrane segment at 470 to 488 threads the bilayer; the sequence is LFLWTFIIFTSVGTLVIFL.

It belongs to the ligand-gated ion channel (TC 1.A.9) family. Acetylcholine receptor (TC 1.A.9.1) subfamily. Beta-1/CHRNB1 sub-subfamily. As to quaternary structure, pentamer of two alpha chains, and one each of the beta, delta, and gamma (in immature muscle) or epsilon (in mature muscle) chains. The muscle heteropentamer composed of alpha-1, beta-1, delta, epsilon subunits interacts with the alpha-conotoxin ImII.

It is found in the postsynaptic cell membrane. Its subcellular location is the cell membrane. The enzyme catalyses K(+)(in) = K(+)(out). It catalyses the reaction Na(+)(in) = Na(+)(out). In terms of biological role, after binding acetylcholine, the AChR responds by an extensive change in conformation that affects all subunits and leads to opening of an ion-conducting channel across the plasma membrane. The polypeptide is Acetylcholine receptor subunit beta (Homo sapiens (Human)).